A 121-amino-acid polypeptide reads, in one-letter code: MTQSTEDTLLRLAAVIDSRKGGDPDQSYVSRLFHKGDDAVLKKIGEEATEVVLAAKDVRQGGAPSALVGEVADLWFHCLVMLSHFDLSPADVIAELERREGLSGIEEKALRKRREREENGG.

It belongs to the PRA-PH family.

It localises to the cytoplasm. The enzyme catalyses 1-(5-phospho-beta-D-ribosyl)-ATP + H2O = 1-(5-phospho-beta-D-ribosyl)-5'-AMP + diphosphate + H(+). It participates in amino-acid biosynthesis; L-histidine biosynthesis; L-histidine from 5-phospho-alpha-D-ribose 1-diphosphate: step 2/9. This chain is Phosphoribosyl-ATP pyrophosphatase, found in Burkholderia cenocepacia (strain HI2424).